A 551-amino-acid chain; its full sequence is Rqc2 homolog RqcH (551 aa).

The interval 363 to 551 (YQKLKEAVKY…SKKIASMKKS (189 aa)) is required for fibronectin binding.

It belongs to the NEMF family. As to quaternary structure, associates with stalled 50S ribosomal subunits, binds to RqcP. Interacts with human fibronectin.

Its subcellular location is the cell surface. The protein localises to the cytoplasm. Functionally, key component of the ribosome quality control system (RQC), a ribosome-associated complex that mediates the extraction of incompletely synthesized nascent chains from stalled ribosomes and their subsequent degradation. RqcH recruits Ala-charged tRNA, and with RqcP directs the elongation of stalled nascent chains on 50S ribosomal subunits, leading to non-templated C-terminal alanine extensions (Ala tail). The Ala tail promotes nascent chain degradation. May add between 1 and at least 8 Ala residues. Binds to stalled 50S ribosomal subunits. In terms of biological role, recombinant protein binds to immobilized human fibronectin; binding is saturable and competed by heparin. Recombinant protein inhibits binding of whole cells to fibronectin. The protein is Rqc2 homolog RqcH of Streptococcus pneumoniae (strain ATCC BAA-255 / R6).